We begin with the raw amino-acid sequence, 745 residues long: uncharacterized protein (745 aa).

Positions 158–256 (NQVCDYIELH…HQTPKQYRGD (99 aa)) constitute an HTH araC/xylS-type domain. 2 DNA-binding regions (H-T-H motif) span residues 175-196 (SELS…TESL) and 223-246 (ITDI…KHFT).

This is an uncharacterized protein from Staphylococcus aureus (strain MW2).